Reading from the N-terminus, the 683-residue chain is Probable potassium transport system protein Kup 1 (683 aa).

The next 12 helical transmembrane spans lie at 13 to 33, 55 to 75, 98 to 118, 139 to 159, 168 to 188, 218 to 238, 251 to 271, 296 to 316, 345 to 365, 376 to 396, 401 to 421, and 426 to 446; these read GLLI…LYVM, ISLV…FIAL, WLVL…TLTP, VPVS…LLLF, IIGK…GVIG, AGIF…ALYS, SWPY…VWIL, LAAI…LITG, IYIP…VLFF, GLSI…WLAM, TIWN…FMLA, and FMHG…IMYV.

This sequence belongs to the HAK/KUP transporter (TC 2.A.72) family.

Its subcellular location is the cell membrane. The enzyme catalyses K(+)(in) + H(+)(in) = K(+)(out) + H(+)(out). In terms of biological role, transport of potassium into the cell. Likely operates as a K(+):H(+) symporter. The protein is Probable potassium transport system protein Kup 1 of Lactobacillus johnsonii (strain CNCM I-12250 / La1 / NCC 533).